A 466-amino-acid chain; its full sequence is Soluble pyridine nucleotide transhydrogenase (466 aa).

36–45 (ERYQNVGGGC) contacts FAD.

This sequence belongs to the class-I pyridine nucleotide-disulfide oxidoreductase family. Homooligomer; probable homooctamer. The cofactor is FAD.

The protein resides in the cytoplasm. The catalysed reaction is NAD(+) + NADPH = NADH + NADP(+). Functionally, conversion of NADPH, generated by peripheral catabolic pathways, to NADH, which can enter the respiratory chain for energy generation. In Escherichia coli O157:H7, this protein is Soluble pyridine nucleotide transhydrogenase.